We begin with the raw amino-acid sequence, 564 residues long: NAD-dependent malic enzyme (564 aa).

Tyr-104 acts as the Proton donor in catalysis. Arg-157 is a binding site for NAD(+). Lys-175 (proton acceptor) is an active-site residue. Glu-246, Asp-247, and Asp-270 together coordinate a divalent metal cation. Residues Asp-270 and Asn-417 each coordinate NAD(+).

It belongs to the malic enzymes family. Homotetramer. It depends on Mg(2+) as a cofactor. Mn(2+) is required as a cofactor.

The catalysed reaction is (S)-malate + NAD(+) = pyruvate + CO2 + NADH. It catalyses the reaction oxaloacetate + H(+) = pyruvate + CO2. The polypeptide is NAD-dependent malic enzyme (Aeromonas salmonicida (strain A449)).